Consider the following 171-residue polypeptide: ATP synthase subunit b (171 aa).

A helical transmembrane segment spans residues 2–22 (FVVKMVLGFLILLSPLCATGL).

It belongs to the ATPase B chain family. In terms of assembly, F-type ATPases have 2 components, F(1) - the catalytic core - and F(0) - the membrane proton channel. F(1) has five subunits: alpha(3), beta(3), gamma(1), delta(1), epsilon(1). F(0) has three main subunits: a(1), b(2) and c(10-14). The alpha and beta chains form an alternating ring which encloses part of the gamma chain. F(1) is attached to F(0) by a central stalk formed by the gamma and epsilon chains, while a peripheral stalk is formed by the delta and b chains.

The protein resides in the cell inner membrane. Its function is as follows. F(1)F(0) ATP synthase produces ATP from ADP in the presence of a proton or sodium gradient. F-type ATPases consist of two structural domains, F(1) containing the extramembraneous catalytic core and F(0) containing the membrane proton channel, linked together by a central stalk and a peripheral stalk. During catalysis, ATP synthesis in the catalytic domain of F(1) is coupled via a rotary mechanism of the central stalk subunits to proton translocation. Functionally, component of the F(0) channel, it forms part of the peripheral stalk, linking F(1) to F(0). In Helicobacter pylori (strain J99 / ATCC 700824) (Campylobacter pylori J99), this protein is ATP synthase subunit b.